Reading from the N-terminus, the 263-residue chain is Endonuclease NucS (263 aa).

It belongs to the NucS endonuclease family.

Its subcellular location is the cytoplasm. In terms of biological role, cleaves both 3' and 5' ssDNA extremities of branched DNA structures. The protein is Endonuclease NucS of Methanocaldococcus jannaschii (strain ATCC 43067 / DSM 2661 / JAL-1 / JCM 10045 / NBRC 100440) (Methanococcus jannaschii).